A 305-amino-acid polypeptide reads, in one-letter code: Translation initiation factor eIF2B subunit alpha (305 aa).

N6-acetyllysine is present on Lys35.

The protein belongs to the eIF-2B alpha/beta/delta subunits family. As to quaternary structure, component of the translation initiation factor 2B (eIF2B) complex which is a heterodecamer of two sets of five different subunits: alpha, beta, gamma, delta and epsilon. Subunits alpha, beta and delta comprise a regulatory subcomplex and subunits epsilon and gamma comprise a catalytic subcomplex. Within the complex, the hexameric regulatory complex resides at the center, with the two heterodimeric catalytic subcomplexes bound on opposite sides.

It is found in the cytoplasm. Its subcellular location is the cytosol. Its activity is regulated as follows. Activated by the chemical integrated stress response (ISR) inhibitor ISRIB which stimulates guanine nucleotide exchange factor activity for both phosphorylated and unphosphorylated eIF2. Functionally, acts as a component of the translation initiation factor 2B (eIF2B) complex, which catalyzes the exchange of GDP for GTP on eukaryotic initiation factor 2 (eIF2) gamma subunit. Its guanine nucleotide exchange factor activity is repressed when bound to eIF2 complex phosphorylated on the alpha subunit, thereby limiting the amount of methionyl-initiator methionine tRNA available to the ribosome and consequently global translation is repressed. The chain is Translation initiation factor eIF2B subunit alpha (Eif2b1) from Rattus norvegicus (Rat).